A 462-amino-acid chain; its full sequence is uncharacterized protein (462 aa).

Asp12, His14, Asp48, Asn81, His179, and His202 together coordinate a divalent metal cation. Residues 258–291 (ESAETKAFLNEKEREAEEKLSDAVAELAQDAEVK) are a coiled coil.

Belongs to the metallophosphoesterase superfamily. Requires a divalent metal cation as cofactor.

This is an uncharacterized protein from Bacillus subtilis (strain 168).